Consider the following 205-residue polypeptide: GTP cyclohydrolase-2 (205 aa).

49-53 is a binding site for GTP; that stretch reads RIHSE. Zn(2+) is bound by residues C54, C65, and C67. Residues Q70, 92–94, and T114 contribute to the GTP site; that span reads EGR. The Proton acceptor role is filled by D126. R128 functions as the Nucleophile in the catalytic mechanism. Residues T149 and K154 each coordinate GTP.

Belongs to the GTP cyclohydrolase II family. The cofactor is Zn(2+).

It carries out the reaction GTP + 4 H2O = 2,5-diamino-6-hydroxy-4-(5-phosphoribosylamino)-pyrimidine + formate + 2 phosphate + 3 H(+). It functions in the pathway cofactor biosynthesis; riboflavin biosynthesis; 5-amino-6-(D-ribitylamino)uracil from GTP: step 1/4. In terms of biological role, catalyzes the conversion of GTP to 2,5-diamino-6-ribosylamino-4(3H)-pyrimidinone 5'-phosphate (DARP), formate and pyrophosphate. The chain is GTP cyclohydrolase-2 from Shewanella loihica (strain ATCC BAA-1088 / PV-4).